A 224-amino-acid polypeptide reads, in one-letter code: Deoxyribose-phosphate aldolase (224 aa).

Asp-98 acts as the Proton donor/acceptor in catalysis. The active-site Schiff-base intermediate with acetaldehyde is Lys-159. The Proton donor/acceptor role is filled by Lys-189.

The protein belongs to the DeoC/FbaB aldolase family. DeoC type 1 subfamily.

The protein localises to the cytoplasm. The enzyme catalyses 2-deoxy-D-ribose 5-phosphate = D-glyceraldehyde 3-phosphate + acetaldehyde. It functions in the pathway carbohydrate degradation; 2-deoxy-D-ribose 1-phosphate degradation; D-glyceraldehyde 3-phosphate and acetaldehyde from 2-deoxy-alpha-D-ribose 1-phosphate: step 2/2. Catalyzes a reversible aldol reaction between acetaldehyde and D-glyceraldehyde 3-phosphate to generate 2-deoxy-D-ribose 5-phosphate. This chain is Deoxyribose-phosphate aldolase, found in Methanothermobacter thermautotrophicus (strain ATCC 29096 / DSM 1053 / JCM 10044 / NBRC 100330 / Delta H) (Methanobacterium thermoautotrophicum).